A 371-amino-acid chain; its full sequence is Ferrochelatase (371 aa).

The Fe cation site is built by histidine 218 and glutamate 299.

Belongs to the ferrochelatase family.

The protein resides in the cytoplasm. The enzyme catalyses heme b + 2 H(+) = protoporphyrin IX + Fe(2+). It functions in the pathway porphyrin-containing compound metabolism; protoheme biosynthesis; protoheme from protoporphyrin-IX: step 1/1. Its function is as follows. Catalyzes the ferrous insertion into protoporphyrin IX. This Ralstonia pickettii (strain 12J) protein is Ferrochelatase.